We begin with the raw amino-acid sequence, 741 residues long: Phosphoribosylformylglycinamidine synthase subunit PurL (741 aa).

Residue histidine 54 is part of the active site. ATP-binding residues include tyrosine 57 and lysine 96. Residue glutamate 98 coordinates Mg(2+). Residues 99 to 102 (SHNH) and arginine 121 contribute to the substrate site. The active-site Proton acceptor is the histidine 100. Aspartate 122 serves as a coordination point for Mg(2+). Glutamine 245 serves as a coordination point for substrate. Aspartate 273 contributes to the Mg(2+) binding site. 317-319 (ESQ) contributes to the substrate binding site. ATP-binding residues include aspartate 500 and glycine 537. A Mg(2+)-binding site is contributed by asparagine 538. Serine 540 contributes to the substrate binding site.

The protein belongs to the FGAMS family. In terms of assembly, monomer. Part of the FGAM synthase complex composed of 1 PurL, 1 PurQ and 2 PurS subunits.

The protein resides in the cytoplasm. It catalyses the reaction N(2)-formyl-N(1)-(5-phospho-beta-D-ribosyl)glycinamide + L-glutamine + ATP + H2O = 2-formamido-N(1)-(5-O-phospho-beta-D-ribosyl)acetamidine + L-glutamate + ADP + phosphate + H(+). It functions in the pathway purine metabolism; IMP biosynthesis via de novo pathway; 5-amino-1-(5-phospho-D-ribosyl)imidazole from N(2)-formyl-N(1)-(5-phospho-D-ribosyl)glycinamide: step 1/2. Functionally, part of the phosphoribosylformylglycinamidine synthase complex involved in the purines biosynthetic pathway. Catalyzes the ATP-dependent conversion of formylglycinamide ribonucleotide (FGAR) and glutamine to yield formylglycinamidine ribonucleotide (FGAM) and glutamate. The FGAM synthase complex is composed of three subunits. PurQ produces an ammonia molecule by converting glutamine to glutamate. PurL transfers the ammonia molecule to FGAR to form FGAM in an ATP-dependent manner. PurS interacts with PurQ and PurL and is thought to assist in the transfer of the ammonia molecule from PurQ to PurL. The chain is Phosphoribosylformylglycinamidine synthase subunit PurL from Shouchella clausii (strain KSM-K16) (Alkalihalobacillus clausii).